The chain runs to 685 residues: ABC transporter G family member 26 (685 aa).

The ABC transporter domain occupies 65–329; it reads LKFEDVEYKV…FSSLRILPEI (265 aa). 124–131 lines the ATP pocket; it reads GPSGSGKT. One can recognise an ABC transmembrane type-2 domain in the interval 414-623; that stretch reads DQFLILSRRT…GFRLLLKVQY (210 aa). A run of 6 helical transmembrane segments spans residues 432–452, 468–488, 518–538, 542–562, 576–596, and 648–668; these read FDKL…LLWW, LMFY…VYVF, MVAH…MAEF, IPCF…SQGA, AGMI…YYVQ, and TINL…AFGY.

The protein belongs to the ABC transporter superfamily. ABCG family. Eye pigment precursor importer (TC 3.A.1.204) subfamily. In terms of assembly, homo- or heterodimer. Mostly expressed in flowers, especially in tapetum within anthers.

The protein resides in the cell membrane. It localises to the endoplasmic reticulum membrane. In terms of biological role, mediates the transport of sporopollenin precursors (e.g. polyketides) across the tapetum plasma membrane into the anther locule for polymerization on developing microspore walls, thus being required for male fertility and pollen exine formation and patterning prior to tapetum programmed cell death. The sequence is that of ABC transporter G family member 26 from Arabidopsis thaliana (Mouse-ear cress).